Here is a 181-residue protein sequence, read N- to C-terminus: MFILASQSPRRQALLKRVVNDFEVQPAQIDEHETPLTAPGDYVQTLAQRKGEAVAVQYPTATILAADTAISFQGTLYGKPKDRQDAYEMLRQLSGQTHQVYTGLWLMKDGLVQQKVVQTDVTFWHLSTAEIEQYLDQNEYADKAGAYGIQGAGALLINKVNGDFYNVVGLPVSTVARMLQN.

Aspartate 67 serves as the catalytic Proton acceptor.

Belongs to the Maf family. YhdE subfamily. The cofactor is a divalent metal cation.

The protein localises to the cytoplasm. It carries out the reaction dTTP + H2O = dTMP + diphosphate + H(+). It catalyses the reaction UTP + H2O = UMP + diphosphate + H(+). Functionally, nucleoside triphosphate pyrophosphatase that hydrolyzes dTTP and UTP. May have a dual role in cell division arrest and in preventing the incorporation of modified nucleotides into cellular nucleic acids. The protein is dTTP/UTP pyrophosphatase of Latilactobacillus sakei subsp. sakei (strain 23K) (Lactobacillus sakei subsp. sakei).